Reading from the N-terminus, the 426-residue chain is COMPASS component SWD1 (426 aa).

WD repeat units follow at residues 24–63, 70–109, 212–251, 264–307, and 310–350; these read ENPL…PICV, AHVR…KPLK, ITSS…ENSA, INKL…LVRV, and GAEE…KWSA. 2 residues coordinate DNA: R236 and K266.

Component of the Set1C/COMPASS complex which consists of SET1(2), BRE2(2), SPP1(2), SDC1(1), SHG1(1), SWD1(1), SWD2(1), and SWD3(1).

It is found in the nucleus. The protein localises to the chromosome. The protein resides in the telomere. Functionally, component of the Set1C/COMPASS complex that specifically mono-, di- and trimethylates histone H3 to form H3K4me1/2/3, which subsequently plays a role in telomere length maintenance and transcription elongation regulation. COMPASS recognizes ubiquitinated H2B on one face of the nucleosome which stimulates the methylation of H3 on the opposing face. SWD1/CPS50 acts as an assembly and regulatory hub for COMPASS complex formation. Serves as a highly utilized surface for COMPASS interaction with the nucleosome. This Saccharomyces cerevisiae (strain ATCC 204508 / S288c) (Baker's yeast) protein is COMPASS component SWD1.